We begin with the raw amino-acid sequence, 295 residues long: Ribosomal RNA small subunit methyltransferase A (295 aa).

Positions 25, 27, 52, 73, 98, and 120 each coordinate S-adenosyl-L-methionine.

It belongs to the class I-like SAM-binding methyltransferase superfamily. rRNA adenine N(6)-methyltransferase family. RsmA subfamily.

The protein resides in the cytoplasm. It carries out the reaction adenosine(1518)/adenosine(1519) in 16S rRNA + 4 S-adenosyl-L-methionine = N(6)-dimethyladenosine(1518)/N(6)-dimethyladenosine(1519) in 16S rRNA + 4 S-adenosyl-L-homocysteine + 4 H(+). In terms of biological role, specifically dimethylates two adjacent adenosines (A1518 and A1519) in the loop of a conserved hairpin near the 3'-end of 16S rRNA in the 30S particle. May play a critical role in biogenesis of 30S subunits. In Desulfotalea psychrophila (strain LSv54 / DSM 12343), this protein is Ribosomal RNA small subunit methyltransferase A.